Consider the following 620-residue polypeptide: Bicaudal D-related protein homolog (620 aa).

Low complexity predominate over residues 23–41 (NNNNNSIVGGSSSSSSGGN). Positions 23 to 53 (NNNNNSIVGGSSSSSSGGNKSKRPRQFGQYS) are disordered. Coiled coils occupy residues 120 to 331 (AAEL…LSER) and 461 to 575 (VLEQ…LIDE). Basic and acidic residues-rich tracts occupy residues 493–503 (KEERDQARGDL) and 509–528 (RDEL…DRRT). Residues 493–528 (KEERDQARGDLEDNTDRDELLSKAQTERDAANDRRT) are disordered.

Belongs to the BICDR family. May homodimerize but does not interact with BicD. May interact with eEF1gamma; The interaction is probably indirect.

In terms of biological role, functions redundantly with BicD. Involved in formation and/or development of mechanosensory organs during metamorphosis. During macrochaetae development, together with BicD, involved in Rab 6 and Spn-F stability and distribution and actin cytoskeleton organization. The polypeptide is Bicaudal D-related protein homolog (Drosophila melanogaster (Fruit fly)).